The chain runs to 106 residues: ATP-dependent Clp protease adapter protein ClpS (106 aa).

It belongs to the ClpS family. Binds to the N-terminal domain of the chaperone ClpA.

Functionally, involved in the modulation of the specificity of the ClpAP-mediated ATP-dependent protein degradation. The chain is ATP-dependent Clp protease adapter protein ClpS from Vibrio parahaemolyticus serotype O3:K6 (strain RIMD 2210633).